Reading from the N-terminus, the 196-residue chain is Putative 3-methyladenine DNA glycosylase (196 aa).

The protein belongs to the DNA glycosylase MPG family.

The protein is Putative 3-methyladenine DNA glycosylase (yxlJ) of Bacillus subtilis (strain 168).